The chain runs to 46 residues: Small polypeptide DEVIL 5 (46 aa).

The helical transmembrane segment at 8–24 (VGGTKRKMWSRGVGGVV) threads the bilayer. Positions 15 to 46 (MWSRGVGGVVREQKAKLYIIRRCVVMLLCWHD) are required for DVL/RTFL small polypeptide activity.

The protein belongs to the DVL/RTFL small polypeptides family. Mostly expressed in roots and flowers, and, to a lower extent, in leaves and stems.

The protein localises to the cell membrane. In terms of biological role, small polypeptide acting as a regulatory molecule which coordinates cellular responses required for differentiation, growth and development, including leaves shape, pedicule elongation, inflorescence organization and fruit maturation, probably by restricting polar cell proliferation in lateral organs and coordinating socket cell recruitment and differentiation at trichome sites. The sequence is that of Small polypeptide DEVIL 5 from Arabidopsis thaliana (Mouse-ear cress).